The sequence spans 175 residues: Large ribosomal subunit protein uL10 (175 aa).

Belongs to the universal ribosomal protein uL10 family. In terms of assembly, part of the ribosomal stalk of the 50S ribosomal subunit. The N-terminus interacts with L11 and the large rRNA to form the base of the stalk. The C-terminus forms an elongated spine to which L12 dimers bind in a sequential fashion forming a multimeric L10(L12)X complex.

Forms part of the ribosomal stalk, playing a central role in the interaction of the ribosome with GTP-bound translation factors. In Picosynechococcus sp. (strain ATCC 27264 / PCC 7002 / PR-6) (Agmenellum quadruplicatum), this protein is Large ribosomal subunit protein uL10.